A 184-amino-acid chain; its full sequence is Threonylcarbamoyl-AMP synthase (184 aa).

Residues 1–184 (MNNLLAVIEL…IFTQHIFRQG (184 aa)) form the YrdC-like domain.

This sequence belongs to the SUA5 family. TsaC subfamily.

Its subcellular location is the cytoplasm. The catalysed reaction is L-threonine + hydrogencarbonate + ATP = L-threonylcarbamoyladenylate + diphosphate + H2O. Its function is as follows. Required for the formation of a threonylcarbamoyl group on adenosine at position 37 (t(6)A37) in tRNAs that read codons beginning with adenine. Catalyzes the conversion of L-threonine, HCO(3)(-)/CO(2) and ATP to give threonylcarbamoyl-AMP (TC-AMP) as the acyladenylate intermediate, with the release of diphosphate. The chain is Threonylcarbamoyl-AMP synthase from Haemophilus ducreyi (strain 35000HP / ATCC 700724).